Consider the following 398-residue polypeptide: Dual-specificity RNA methyltransferase RlmN (398 aa).

Glu119 (proton acceptor) is an active-site residue. Residues 125 to 364 (EADRATLCVS…TIVRKTRGDD (240 aa)) form the Radical SAM core domain. Cys132 and Cys369 are joined by a disulfide. [4Fe-4S] cluster-binding residues include Cys139, Cys143, and Cys146. S-adenosyl-L-methionine contacts are provided by residues 193 to 194 (GE), Ser225, 247 to 249 (SLH), and Asn326. The S-methylcysteine intermediate role is filled by Cys369.

This sequence belongs to the radical SAM superfamily. RlmN family. The cofactor is [4Fe-4S] cluster.

The protein localises to the cytoplasm. The catalysed reaction is adenosine(2503) in 23S rRNA + 2 reduced [2Fe-2S]-[ferredoxin] + 2 S-adenosyl-L-methionine = 2-methyladenosine(2503) in 23S rRNA + 5'-deoxyadenosine + L-methionine + 2 oxidized [2Fe-2S]-[ferredoxin] + S-adenosyl-L-homocysteine. It carries out the reaction adenosine(37) in tRNA + 2 reduced [2Fe-2S]-[ferredoxin] + 2 S-adenosyl-L-methionine = 2-methyladenosine(37) in tRNA + 5'-deoxyadenosine + L-methionine + 2 oxidized [2Fe-2S]-[ferredoxin] + S-adenosyl-L-homocysteine. Its function is as follows. Specifically methylates position 2 of adenine 2503 in 23S rRNA and position 2 of adenine 37 in tRNAs. m2A2503 modification seems to play a crucial role in the proofreading step occurring at the peptidyl transferase center and thus would serve to optimize ribosomal fidelity. The polypeptide is Dual-specificity RNA methyltransferase RlmN (Yersinia pseudotuberculosis serotype O:3 (strain YPIII)).